A 239-amino-acid polypeptide reads, in one-letter code: UPF0502 protein Bcen_5249 (239 aa).

The interval 196-239 (IRGAKGRTEAPRGRSGATQCAGSTDGERTRHRRRRTGRRVLIAS) is disordered. The segment covering 224–233 (TRHRRRRTGR) has biased composition (basic residues).

Belongs to the UPF0502 family.

This Burkholderia orbicola (strain AU 1054) protein is UPF0502 protein Bcen_5249.